A 79-amino-acid polypeptide reads, in one-letter code: Spidroin-1 (79 aa).

Belongs to the silk fibroin family. As to quaternary structure, major subunit, with spidroin 2, of the dragline silk.

The protein localises to the secreted. The protein resides in the extracellular space. Spiders' major ampullate silk possesses unique characteristics of strength and elasticity. Fibroin consists of pseudocrystalline regions of antiparallel beta-sheet interspersed with elastic amorphous segments. This chain is Spidroin-1, found in Araneus bicentenarius (Giant lichen orbweaver).